The primary structure comprises 532 residues: 2,3-bisphosphoglycerate-independent phosphoglycerate mutase (532 aa).

2 residues coordinate Mn(2+): Asp-13 and Ser-63. Ser-63 functions as the Phosphoserine intermediate in the catalytic mechanism. Substrate is bound by residues His-124, 154–155 (RD), Arg-187, Arg-193, 262–265 (RPDR), and Lys-343. Residues Asp-421, His-425, Asp-463, His-464, and His-481 each contribute to the Mn(2+) site.

The protein belongs to the BPG-independent phosphoglycerate mutase family. Monomer. Requires Mn(2+) as cofactor.

It carries out the reaction (2R)-2-phosphoglycerate = (2R)-3-phosphoglycerate. The protein operates within carbohydrate degradation; glycolysis; pyruvate from D-glyceraldehyde 3-phosphate: step 3/5. Its function is as follows. Catalyzes the interconversion of 2-phosphoglycerate and 3-phosphoglycerate. This is 2,3-bisphosphoglycerate-independent phosphoglycerate mutase from Mesoplasma florum (strain ATCC 33453 / NBRC 100688 / NCTC 11704 / L1) (Acholeplasma florum).